Consider the following 445-residue polypeptide: MKPVIALVGRPNVGKSTLFNRLTRSRDALVADLPGLTRDRHYGEGRVGERPYLVVDTGGFEPVAKDGILHEMARQTRQAVEEADVVVFIVDGRNGLAPQDKSIADYLRKTGRPIFLVVNKAEGMKYTAVATDFYELGLGDPRAISAAHGDGVTDMINEALEVAYAGQPEEADDNDPSRGIKIAIVGRPNVGKSTLVNALIGEDRVIAFDMPGTTRDSIYVDFERNGKKYTLIDTAGLRRRGKVFEAIEKFSVVKTLQSISDANVVILLLDAQQDISDQDAHIAGFVVEQGRALVIGVNKWDGLDDHARDRAKADLTRKLKFLDFAKSHYISAAKKTGIGALMRSVDDAYAAAMAKLPTPKLTRALIEAVEFQQPRRRGPVRPKLRYAHQGGQNPPLIVIHGNALDAVTETYKRYLENRFRETFSLTGTPLRIEFRSSNNPYADKG.

2 consecutive EngA-type G domains span residues 3–167 (PVIA…YAGQ) and 180–353 (IKIA…AAAM). GTP contacts are provided by residues 9-16 (GRPNVGKS), 56-60 (DTGGF), 119-122 (NKAE), 186-193 (GRPNVGKS), 233-237 (DTAGL), and 298-301 (NKWD). The region spanning 354–438 (AKLPTPKLTR…PLRIEFRSSN (85 aa)) is the KH-like domain.

Belongs to the TRAFAC class TrmE-Era-EngA-EngB-Septin-like GTPase superfamily. EngA (Der) GTPase family. As to quaternary structure, associates with the 50S ribosomal subunit.

GTPase that plays an essential role in the late steps of ribosome biogenesis. The sequence is that of GTPase Der from Burkholderia vietnamiensis (strain G4 / LMG 22486) (Burkholderia cepacia (strain R1808)).